Consider the following 166-residue polypeptide: Endoribonuclease YbeY (166 aa).

3 residues coordinate Zn(2+): histidine 131, histidine 135, and histidine 141.

The protein belongs to the endoribonuclease YbeY family. Zn(2+) is required as a cofactor.

The protein resides in the cytoplasm. Functionally, single strand-specific metallo-endoribonuclease involved in late-stage 70S ribosome quality control and in maturation of the 3' terminus of the 16S rRNA. The sequence is that of Endoribonuclease YbeY from Dehalococcoides mccartyi (strain CBDB1).